A 458-amino-acid chain; its full sequence is UDP-N-acetylmuramate--L-alanine ligase (458 aa).

Residue 118–124 (GTHGKTT) participates in ATP binding.

Belongs to the MurCDEF family.

It localises to the cytoplasm. It carries out the reaction UDP-N-acetyl-alpha-D-muramate + L-alanine + ATP = UDP-N-acetyl-alpha-D-muramoyl-L-alanine + ADP + phosphate + H(+). Its pathway is cell wall biogenesis; peptidoglycan biosynthesis. Functionally, cell wall formation. This chain is UDP-N-acetylmuramate--L-alanine ligase, found in Clostridium botulinum (strain Okra / Type B1).